A 548-amino-acid polypeptide reads, in one-letter code: Synaptic vesicle 2-related protein (548 aa).

Topologically, residues 1 to 87 are cytoplasmic; it reads MEEDLFQLRQ…GFGRFQWKLS (87 aa). Ser25 and Ser31 each carry phosphoserine. Residues 88-108 traverse the membrane as a helical segment; it reads VLTGLAWMADAMEMMILSILA. The Vesicular segment spans residues 109–122; it reads PQLHCEWRLPSWQV. The helical transmembrane segment at 123–143 threads the bilayer; the sequence is ALLTSVVFIGMMSSSTLWGNI. Over 144 to 156 the chain is Cytoplasmic; that stretch reads SDQYGRKTGLKIS. Residues 157-177 form a helical membrane-spanning segment; it reads VFWTLYYGILSAFAPVYSWIL. Residues 178 to 180 are Vesicular-facing; the sequence is VLR. A helical membrane pass occupies residues 181 to 201; it reads GLVGFGIGGVPQSVTLYAEFL. Topologically, residues 202–209 are cytoplasmic; that stretch reads PMKARAKC. The chain crosses the membrane as a helical span at residues 210-230; sequence ILLIEVFWAIGTVFEVLLAVF. Over 231 to 238 the chain is Vesicular; it reads VMPSLGWR. A helical membrane pass occupies residues 239–259; that stretch reads WLLLLSAAPLLVFAVLCFWLP. The Cytoplasmic portion of the chain corresponds to 260–316; the sequence is ESARYDVLSGNQEKAIATLKRIATENGAPMPLGKLIISRQEDRGKMRDLFTPHFRWT. A helical transmembrane segment spans residues 317-337; the sequence is TLLLWFIWFSNAFSYYGLVLL. The Vesicular portion of the chain corresponds to 338-373; the sequence is TTELFQAGDVCSISSRKKAVEAKCSLACEYLSKEDY. Residues 374-394 form a helical membrane-spanning segment; it reads MDLLWTTLSEFPGVLVTLWVI. Over 395-401 the chain is Cytoplasmic; sequence DRLGRKK. The helical transmembrane segment at 402-422 threads the bilayer; the sequence is TMALCFVIFSLCSLLLFICIG. The Vesicular portion of the chain corresponds to 423–424; that stretch reads RN. A helical transmembrane segment spans residues 425–445; that stretch reads VLTLLLFIARAFISGGFQAAY. The Cytoplasmic portion of the chain corresponds to 446–457; sequence VYTPEVYPTATR. The helical transmembrane segment at 458 to 478 threads the bilayer; that stretch reads ALGLGTCSGMARVGALITPFI. The Vesicular portion of the chain corresponds to 479–489; sequence AQVMLESSVYL. The chain crosses the membrane as a helical span at residues 490–510; sequence TLAVYSGCCLLAALASCFLPI. Over 511 to 548 the chain is Cytoplasmic; that stretch reads ETKGRALQESSHREWGQEMVGRGTNSTGVPRSNSGSQE. The segment at 523 to 548 is disordered; that stretch reads REWGQEMVGRGTNSTGVPRSNSGSQE. The span at 533 to 548 shows a compositional bias: polar residues; it reads GTNSTGVPRSNSGSQE. Ser542 bears the Phosphoserine mark.

Belongs to the major facilitator superfamily. Detected in brain (at protein level). Detected in brain, in synaptic layers of the cerebellum, hippocampus and cerebral cortex.

It localises to the cytoplasmic vesicle. It is found in the secretory vesicle. The protein localises to the synaptic vesicle membrane. The sequence is that of Synaptic vesicle 2-related protein (Svop) from Rattus norvegicus (Rat).